A 297-amino-acid polypeptide reads, in one-letter code: F-box only protein 2 (297 aa).

Residues 1–42 (MDGDGDPESVGQPEEASPEEQQEEACAEEANGGEERPEDDGE) are disordered. Positions 16-27 (ASPEEQQEEACA) are enriched in acidic residues. The F-box domain occupies 45-92 (AAYLDELPEPLLLRVLAELPAAQLVQACRLVCLRWKELVDGAPLWLLK). One can recognise an FBA domain in the interval 114-297 (FYFLSKRRRN…VTNSSVWVEP (184 aa)). Residues 211–213 (RRD) and 279–280 (YW) contribute to the a carbohydrate site.

In terms of assembly, component of the SCF(FBXO2) complex consisting of CUL1, RBX1, SKP1 and FBXO2. Predominantly detected as heterodimer with SKP1; the heterodimer with SKP1 is not part of the SCF(FBXO2) complex.

The protein localises to the cytoplasm. The protein resides in the microsome membrane. It functions in the pathway protein modification; protein ubiquitination. Substrate recognition component of a SCF (SKP1-CUL1-F-box protein) E3 ubiquitin-protein ligase complex that mediates the ubiquitination and subsequent proteasomal degradation of target proteins. Involved in the endoplasmic reticulum-associated degradation pathway (ERAD) for misfolded lumenal proteins by recognizing and binding sugar chains on unfolded glycoproteins that are retrotranslocated into the cytosol and promoting their ubiquitination and subsequent degradation. Prevents formation of cytosolic aggregates of unfolded glycoproteins that have been retrotranslocated into the cytosol. Able to recognize and bind denatured glycoproteins, preferentially those of the high-mannose type. This chain is F-box only protein 2 (FBXO2), found in Bos taurus (Bovine).